Consider the following 344-residue polypeptide: tRNA N6-adenosine threonylcarbamoyltransferase (344 aa).

2 residues coordinate Fe cation: His110 and His114. Substrate is bound by residues 133–137 (AVSGA), Asp166, Gly179, and Asn278. Asp303 is a Fe cation binding site.

The protein belongs to the KAE1 / TsaD family. Fe(2+) is required as a cofactor.

The protein resides in the cytoplasm. It catalyses the reaction L-threonylcarbamoyladenylate + adenosine(37) in tRNA = N(6)-L-threonylcarbamoyladenosine(37) in tRNA + AMP + H(+). Its function is as follows. Required for the formation of a threonylcarbamoyl group on adenosine at position 37 (t(6)A37) in tRNAs that read codons beginning with adenine. Is involved in the transfer of the threonylcarbamoyl moiety of threonylcarbamoyl-AMP (TC-AMP) to the N6 group of A37, together with TsaE and TsaB. TsaD likely plays a direct catalytic role in this reaction. The protein is tRNA N6-adenosine threonylcarbamoyltransferase of Chlamydia caviae (strain ATCC VR-813 / DSM 19441 / 03DC25 / GPIC) (Chlamydophila caviae).